Consider the following 403-residue polypeptide: Cystinosin homolog (403 aa).

Over 1–122 (MKLPVSILFF…YSRITVIRSH (122 aa)) the chain is Lumenal. Residues asparagine 45, asparagine 52, asparagine 78, and asparagine 96 are each glycosylated (N-linked (GlcNAc...) asparagine). A helical transmembrane segment spans residues 123–143 (WLAILIQIVGWTYFAAWSVSF). Positions 124–190 (LAILIQIVGW…MYYNSHVKNI (67 aa)) constitute a PQ-loop 1 domain. The Cytoplasmic portion of the chain corresponds to 144-162 (YPQMYLNFKRKSVVGLNFD). A helical membrane pass occupies residues 163 to 183 (FLSLNLVGFGAYAMFNLLMYY). Over 184–206 (NSHVKNIYSMENPRSPPPVLLND) the chain is Lumenal. Residues 207–227 (VVFAVHAFLACFVTILQCIFY) traverse the membrane as a helical segment. At 228-237 (ERDQQRISTK) the chain is on the cytoplasmic side. The chain crosses the membrane as a helical span at residues 238-258 (CIILIIGLVSFGFVSVVVTVL). Residues 259-260 (NK) are Lumenal-facing. Residues 261-283 (ITILDFVVSLSYIKMAVTCCKYF) traverse the membrane as a helical segment. The PQ-loop 2 domain maps to 266 to 326 (FVVSLSYIKM…MVLQAINVND (61 aa)). The Cytoplasmic portion of the chain corresponds to 284–294 (PQAYFNYQRKS). Residues 295 to 315 (TVGWSIGNILLDFTGGSLDIL) form a helical membrane-spanning segment. The Lumenal segment spans residues 316–336 (QMVLQAINVNDWSAFYANPVK). A helical membrane pass occupies residues 337-357 (FGLGFVSIFFDIIFMIQHYAL). Topologically, residues 358–403 (YPDAEVPHNEYHGVDNPDPDSIVRDAEHGAADNESMESTDPIIVHD) are cytoplasmic. A compositionally biased stretch (basic and acidic residues) spans 374–388 (PDPDSIVRDAEHGAA). The segment at 374–403 (PDPDSIVRDAEHGAADNESMESTDPIIVHD) is disordered.

Belongs to the cystinosin family.

It localises to the lysosome membrane. The protein localises to the cytoplasmic vesicle. It is found in the phagosome. The enzyme catalyses L-cystine(out) + H(+)(out) = L-cystine(in) + H(+)(in). Its function is as follows. Cystine/H(+) symporter that mediates export of cystine, the oxidized dimer of cysteine, from lysosomes. May play a role in the degradation of engulfed apoptotic cells. This Caenorhabditis briggsae protein is Cystinosin homolog (ctns-1).